Consider the following 305-residue polypeptide: MALSSRLWRRLPPLRVCQQTRTWGSRGRCGAWGVRACEVIGNTRPFKRGFLFSALSYLGFETYQIISQAAVVHATAKVEEILAQADYLYESGETEKLYQLLIQYKESEDGELLWRLARASRDIAQLSKTSEEEKKVLVYEALDYAKRALEKKESSSAAHKWYAICISDVGDYEGIKVKIANAYVIKEHFEKAIELNPKDATSIHLMGIWCYTFAEMPWYQRRIAKVLFANPPSSTYEEALRYFHKAEEVDPNFYSKNLLLLGKTYLKLNNKKLAAFWLVKAKGYPAHTEEDKQIQTEAAQLLTGL.

At Lys-160 the chain carries N6-succinyllysine. TPR repeat units lie at residues 163–199 and 217–253; these read AICI…NPKD and PWYQ…DPNF. An N6-succinyllysine modification is found at Lys-245.

It belongs to the RMDN family. In terms of assembly, interacts with microtubules.

Its subcellular location is the cytoplasm. It localises to the cytoskeleton. The protein resides in the spindle. It is found in the spindle pole. In Mus musculus (Mouse), this protein is Regulator of microtubule dynamics protein 1 (Rmdn1).